The following is a 369-amino-acid chain: UPF0284 protein AM1_5137 (369 aa).

This sequence belongs to the UPF0284 family.

The protein is UPF0284 protein AM1_5137 of Acaryochloris marina (strain MBIC 11017).